Consider the following 650-residue polypeptide: MKTQKNIFKVKALLLSLFSAAVTITIFALPIFANNGSKTDLGLLSKNSADFLGSSKRSLAGFDTPFSPDNLQYLEKETDYDQNFKSFTEKFKDEKITNNQLGIVDIYNLFSGFHKSVKSTVDLMNQLQKQVEAANAIFPVDDAFVKLPKVPTELFKLVDDNVFPKLNPKGLNISDNIAALFERYNLKSIELKNFDLAFLRKADVIIKDKVRYNFEMQMQFQTVYVGGGNTVINLDFTLKAQTVNFANLQDLQNTFVKVGNDLSTQLFWIPTVNKLTDNAGNDLTHIAKTVIGESFFQTNVNLAKSVIEYDKVQPLVKQAFEERVLTPFKKEREAAKKAYEEEQRRLEEERKRQLEELRRREAEEKRKAEEAKRNQEKARREREAYEKSFNSFKDFKFYWLTKGKDVTKKADLIDALKTAIATPAYRNRTFSLLIKGFASGVERYFNANKNDKELKKLAFGEKGIQFPRADAGVNGLYMSNFLRHELTSKAKFSLNLKDIKVENTVEDTQLYWKDNGIHLKQANPYKFNLNIKIKYNGWYNVHWWNWLPAKILGIPTDWSGEMNLTFVVNGDLSEIVDKHDYPGTFFQFTDKNELLFTLAVREQIKVDNNHFMGLLKSQNLHNLQLASGATKPPVVDLASYFHFVLLTEKS.

It belongs to the MG032/MG096/MG288 family.

This is an uncharacterized protein from Mycoplasma genitalium (strain ATCC 33530 / DSM 19775 / NCTC 10195 / G37) (Mycoplasmoides genitalium).